A 325-amino-acid polypeptide reads, in one-letter code: Lactonase drp35 (325 aa).

Residues Glu-46, Thr-108, Gly-110, Asp-128, Thr-131, Tyr-133, Asp-136, Asn-183, Asp-234, and Ser-235 each coordinate Ca(2+). Asp-234 (proton donor) is an active-site residue.

The protein belongs to the SMP-30/CGR1 family. It depends on Ca(2+) as a cofactor.

It is found in the cytoplasm. Functionally, exhibits lactonase activity. Acts in cells with perturbed membrane integrity and is possibly related to the membrane homeostasis. In Staphylococcus epidermidis (strain ATCC 12228 / FDA PCI 1200), this protein is Lactonase drp35 (drp35).